The following is a 281-amino-acid chain: Transmembrane protein 41A-A (281 aa).

The signal sequence occupies residues 1 to 22 (MRSLVGLVAVIVTATFYLYSLS). Positions 32-56 (HKQSHEGETTDAKDGDEPSEMETAS) are disordered. Residues 34–47 (QSHEGETTDAKDGD) show a composition bias toward basic and acidic residues. Transmembrane regions (helical) follow at residues 84 to 104 (GYVL…AIPG), 107 to 127 (FLNI…LTCV), 170 to 190 (LFFF…FLNM), 197 to 217 (IPVT…NFIC), and 236 to 256 (WSVV…GALI).

Belongs to the TMEM41 family.

It localises to the membrane. In Danio rerio (Zebrafish), this protein is Transmembrane protein 41A-A (tmem41aa).